The primary structure comprises 115 residues: NADH-ubiquinone oxidoreductase chain 3 (115 aa).

The next 3 membrane-spanning stretches (helical) occupy residues 4 to 24 (LLTM…AFWL), 55 to 75 (FFLV…LLPI), and 84 to 104 (INTM…GLAY).

This sequence belongs to the complex I subunit 3 family. Core subunit of respiratory chain NADH dehydrogenase (Complex I) which is composed of 45 different subunits. Interacts with TMEM186. Interacts with TMEM242.

The protein localises to the mitochondrion inner membrane. It catalyses the reaction a ubiquinone + NADH + 5 H(+)(in) = a ubiquinol + NAD(+) + 4 H(+)(out). In terms of biological role, core subunit of the mitochondrial membrane respiratory chain NADH dehydrogenase (Complex I) which catalyzes electron transfer from NADH through the respiratory chain, using ubiquinone as an electron acceptor. Essential for the catalytic activity of complex I. The polypeptide is NADH-ubiquinone oxidoreductase chain 3 (Neotoma lepida (Desert woodrat)).